The following is a 265-amino-acid chain: NAD kinase 2 (265 aa).

Aspartate 51 functions as the Proton acceptor in the catalytic mechanism. Residues aspartate 51–glycine 52, asparagine 122–glutamate 123, arginine 149, aspartate 151, threonine 162–serine 167, and alanine 186 each bind NAD(+).

It belongs to the NAD kinase family. Requires a divalent metal cation as cofactor.

Its subcellular location is the cytoplasm. It carries out the reaction NAD(+) + ATP = ADP + NADP(+) + H(+). Functionally, involved in the regulation of the intracellular balance of NAD and NADP, and is a key enzyme in the biosynthesis of NADP. Catalyzes specifically the phosphorylation on 2'-hydroxyl of the adenosine moiety of NAD to yield NADP. The sequence is that of NAD kinase 2 from Bacillus licheniformis (strain ATCC 14580 / DSM 13 / JCM 2505 / CCUG 7422 / NBRC 12200 / NCIMB 9375 / NCTC 10341 / NRRL NRS-1264 / Gibson 46).